Here is a 507-residue protein sequence, read N- to C-terminus: Protoheme IX farnesyltransferase, mitochondrial (507 aa).

Positions 72 to 90 (STSASASTTHDSTLSSSPT) are enriched in low complexity. The segment at 72 to 136 (STSASASTTH…RGEKPLPPDA (65 aa)) is disordered. The segment covering 99–111 (KDHKIAPHRKRQA) has biased composition (basic residues). Transmembrane regions (helical) follow at residues 166-186 (LTML…VPEM), 199-219 (PLTL…ANAL), 248-268 (AAVL…YFGV), 270-290 (PTVS…YTPL), 298-318 (TWIG…AAAG), 339-359 (IGGW…FMAL), 392-412 (FVFI…WSFA), and 441-461 (GLFW…LLHK).

Belongs to the UbiA prenyltransferase family.

The protein localises to the mitochondrion membrane. The catalysed reaction is heme b + (2E,6E)-farnesyl diphosphate + H2O = Fe(II)-heme o + diphosphate. In terms of biological role, converts protoheme IX and farnesyl diphosphate to heme O. This Gibberella zeae (strain ATCC MYA-4620 / CBS 123657 / FGSC 9075 / NRRL 31084 / PH-1) (Wheat head blight fungus) protein is Protoheme IX farnesyltransferase, mitochondrial (COX10).